Here is a 76-residue protein sequence, read N- to C-terminus: IHATAHAVCVVLAAFGYWVAAPISLAFTTSGGVLGALYLRKRATGASRLAATHISRWLIVSVYVAAGLCYATIITH.

The next 2 membrane-spanning stretches (helical) occupy residues 7-27 (AVCV…SLAF) and 54-74 (ISRW…ATII).

The protein belongs to the alphaherpesvirinae HHV-1 UL43 family.

It is found in the membrane. The protein is Membrane protein UL43 homolog of Equus caballus (Horse).